Consider the following 385-residue polypeptide: WD repeat-containing protein 74 (385 aa).

WD repeat units lie at residues 40-80, 83-122, 128-168, 179-220, 224-266, and 267-306; these read RREE…FQGQ, CPGGEGTFRGLAQVDGTLITCVDSGILRVWTDKDKEASSD, RVGP…EPLF, DLRV…RRPV, TYGE…GCLK, and GLAGSVRGLQCHPSKPLLASCGLDRVLRIHRIRNPRGLEH. Residue S214 is modified to Phosphoserine. K311 carries the N6-methyllysine modification. The required for nucleolar and nuclear location stretch occupies residues 320-385; that stretch reads SGRDNWEDEP…KKKRPGSTSS (66 aa). A disordered region spans residues 323 to 385; the sequence is DNWEDEPQEP…KKKRPGSTSS (63 aa). A compositionally biased stretch (basic residues) spans 372–385; the sequence is ARRRKKKRPGSTSS.

Isoform 1 interacts (through WDR repeats) with NVL; the interaction is independent of RNA or pre-60S ribosome particles. Isoform 2 does not interact with NVL. Interacts with MTREX; the interaction dissociation in a late stage of rRNA synthesis is required for appropriate maturation of pre-60S particles and depends on the ATPase activity of NVL.

It localises to the nucleus. The protein resides in the nucleolus. Its function is as follows. Regulatory protein of the MTREX-exosome complex involved in the synthesis of the 60S ribosomal subunit. Participates in an early cleavage of the pre-rRNA processing pathway in cooperation with NVL. This is WD repeat-containing protein 74 (WDR74) from Bos taurus (Bovine).